The sequence spans 1297 residues: Cingulin-like protein 1 (1297 aa).

A head region spans residues 1 to 550 (MELYFGEYQH…ELTQQTNEET (550 aa)). A ZIM motif is present at residues 37 to 51 (AGSYGVSIRVQGIDG). Phosphoserine occurs at positions 113, 203, and 257. 4 disordered regions span residues 161 to 208 (NEVN…TSED), 245 to 306 (GVGE…TPTS), 364 to 396 (KPGL…AFPF), and 428 to 467 (QRSV…DGKV). Polar residues predominate over residues 197–206 (YGSQPNSPTS). A compositionally biased stretch (basic and acidic residues) spans 268–283 (ETKKNRPDVLPFRRQD). Phosphoserine is present on residues S284, S298, and S299. Residues 297–306 (SSSSSTTPTS) are compositionally biased toward low complexity. The segment covering 367 to 378 (LQRRGRSGKRNR) has biased composition (basic residues). Basic and acidic residues predominate over residues 379–389 (INPDDRKRSRS). Residues S389 and S392 each carry the phosphoserine modification. At S482 the chain carries Phosphoserine. The segment at 586–608 (SRAAGSAQGSNQAPNSPSEGNSL) is disordered. Positions 592–608 (AQGSNQAPNSPSEGNSL) are enriched in polar residues. The stretch at 604-1251 (EGNSLLDQKN…LQGQLNSLKK (648 aa)) forms a coiled coil. Residues S678 and S704 each carry the phosphoserine modification. The segment at 1259–1297 (SSKVLDDSDDDDLSSDAGSLYEAPLSYAFPKDSTIASQI) is tail.

This sequence belongs to the cingulin family. As to quaternary structure, homodimer or oligomer. Interacts with CD2AP and SH3BP1; probably part of a complex at cell junctions. In terms of tissue distribution, widely expressed. Highly expressed in the kidney and lung.

The protein resides in the cell junction. It localises to the tight junction. Its function is as follows. May be involved in anchoring the apical junctional complex, especially tight junctions, to actin-based cytoskeletons. The protein is Cingulin-like protein 1 of Mus musculus (Mouse).